Here is a 428-residue protein sequence, read N- to C-terminus: Histone deacetylase 3 (428 aa).

The interval lysine 3 to aspartate 316 is histone deacetylase. 1D-myo-inositol 1,4,5,6-tetrakisphosphate-binding residues include histidine 17, glycine 21, and lysine 25. The active site involves histidine 135. Aspartate 170, histidine 172, and aspartate 259 together coordinate Zn(2+). 1D-myo-inositol 1,4,5,6-tetrakisphosphate is bound at residue arginine 265. Composition is skewed to basic and acidic residues over residues serine 386–serine 405 and aspartate 415–isoleucine 428. The disordered stretch occupies residues serine 386–isoleucine 428.

It belongs to the histone deacetylase family. HD type 1 subfamily.

Its subcellular location is the nucleus. It is found in the chromosome. The protein localises to the cytoplasm. It localises to the cytosol. The catalysed reaction is N(6)-acetyl-L-lysyl-[histone] + H2O = L-lysyl-[histone] + acetate. It catalyses the reaction N(6)-acetyl-L-lysyl-[protein] + H2O = L-lysyl-[protein] + acetate. It carries out the reaction N(6)-(2E)-butenoyl-L-lysyl-[protein] + H2O = (2E)-2-butenoate + L-lysyl-[protein]. The enzyme catalyses N(6)-(2-hydroxyisobutanoyl)-L-lysyl-[protein] + H2O = 2-hydroxy-2-methylpropanoate + L-lysyl-[protein]. The catalysed reaction is N(6)-[(S)-lactoyl]-L-lysyl-[protein] + H2O = (S)-lactate + L-lysyl-[protein]. Inositol tetraphosphate (1D-myo-inositol 1,4,5,6-tetrakisphosphate) promotes the histone deacetylase activity by acting as an intermolecular glue between hdac3 and N-Cor repressor complex components. Its function is as follows. Histone deacetylase that catalyzes the deacetylation of lysine residues on the N-terminal part of the core histones (H2A, H2B, H3 and H4), and some other non-histone substrates. Histone deacetylation gives a tag for epigenetic repression and plays an important role in transcriptional regulation, cell cycle progression and developmental events. Histone deacetylases act via the formation of large multiprotein complexes, such as N-Cor repressor complex, which activate the histone deacetylase activity. Participates in the BCL6 transcriptional repressor activity by deacetylating the H3 'Lys-27' (H3K27) on enhancer elements, antagonizing EP300 acetyltransferase activity and repressing proximal gene expression. Also functions as a deacetylase for non-histone targets. In addition to protein deacetylase activity, also acts as a protein-lysine deacylase by recognizing other acyl groups: catalyzes removal of (2E)-butenoyl (crotonyl), lactoyl (lactyl) and 2-hydroxyisobutanoyl (2-hydroxyisobutyryl) acyl groups from lysine residues, leading to protein decrotonylation, delactylation and de-2-hydroxyisobutyrylation, respectively. The protein is Histone deacetylase 3 (hdac3) of Xenopus tropicalis (Western clawed frog).